Consider the following 321-residue polypeptide: XylDLEGF operon transcriptional activator 1 (321 aa).

The HTH araC/xylS-type domain occupies 214–315 (ERVVQFIEEN…GELPSDTLRQ (102 aa)). 2 consecutive DNA-binding regions (H-T-H motif) follow at residues 231-252 (ERLA…EKHA) and 282-305 (ITEI…RSAF).

The protein localises to the cytoplasm. Regulatory protein of the TOL plasmid xyl operons. XylS activates the xylXYZLTEGFJQKIH operon required for the degradation of toluene, m-xylene and p-xylene. The polypeptide is XylDLEGF operon transcriptional activator 1 (xylS1) (Pseudomonas putida (Arthrobacter siderocapsulatus)).